Consider the following 834-residue polypeptide: Glycerol-3-phosphate acyltransferase (834 aa).

The HXXXXD motif motif lies at 309–314 (CHRSHI).

It belongs to the GPAT/DAPAT family.

The protein localises to the cell inner membrane. It catalyses the reaction sn-glycerol 3-phosphate + an acyl-CoA = a 1-acyl-sn-glycero-3-phosphate + CoA. The protein operates within phospholipid metabolism; CDP-diacylglycerol biosynthesis; CDP-diacylglycerol from sn-glycerol 3-phosphate: step 1/3. This Pseudomonas aeruginosa (strain LESB58) protein is Glycerol-3-phosphate acyltransferase.